We begin with the raw amino-acid sequence, 142 residues long: Small heat shock protein IbpB (142 aa).

The 112-residue stretch at 26–137 folds into the sHSP domain; that stretch reads AGEGQSFPPY…AAQRIAISER (112 aa).

It belongs to the small heat shock protein (HSP20) family. As to quaternary structure, homodimer. Forms homomultimers of about 100-150 subunits at optimal growth temperatures. Conformation changes to oligomers at high temperatures or high ionic concentrations. The decrease in size of the multimers is accompanied by an increase in chaperone activity.

The protein resides in the cytoplasm. In terms of biological role, associates with aggregated proteins, together with IbpA, to stabilize and protect them from irreversible denaturation and extensive proteolysis during heat shock and oxidative stress. Aggregated proteins bound to the IbpAB complex are more efficiently refolded and reactivated by the ATP-dependent chaperone systems ClpB and DnaK/DnaJ/GrpE. Its activity is ATP-independent. This is Small heat shock protein IbpB from Shigella boydii serotype 18 (strain CDC 3083-94 / BS512).